The sequence spans 307 residues: 1D-myo-inositol 2-acetamido-2-deoxy-alpha-D-glucopyranoside deacetylase 1 (307 aa).

Zn(2+)-binding residues include histidine 21, aspartate 24, and histidine 157.

Belongs to the MshB deacetylase family. It depends on Zn(2+) as a cofactor.

It carries out the reaction 1D-myo-inositol 2-acetamido-2-deoxy-alpha-D-glucopyranoside + H2O = 1D-myo-inositol 2-amino-2-deoxy-alpha-D-glucopyranoside + acetate. Its function is as follows. Catalyzes the deacetylation of 1D-myo-inositol 2-acetamido-2-deoxy-alpha-D-glucopyranoside (GlcNAc-Ins) in the mycothiol biosynthesis pathway. The sequence is that of 1D-myo-inositol 2-acetamido-2-deoxy-alpha-D-glucopyranoside deacetylase 1 from Frankia casuarinae (strain DSM 45818 / CECT 9043 / HFP020203 / CcI3).